The chain runs to 312 residues: Glyoxylate/hydroxypyruvate reductase A (312 aa).

R227 is a catalytic residue. Residue H275 is the Proton donor of the active site.

It belongs to the D-isomer specific 2-hydroxyacid dehydrogenase family. GhrA subfamily.

It is found in the cytoplasm. It catalyses the reaction glycolate + NADP(+) = glyoxylate + NADPH + H(+). It carries out the reaction (R)-glycerate + NAD(+) = 3-hydroxypyruvate + NADH + H(+). The enzyme catalyses (R)-glycerate + NADP(+) = 3-hydroxypyruvate + NADPH + H(+). In terms of biological role, catalyzes the NADPH-dependent reduction of glyoxylate and hydroxypyruvate into glycolate and glycerate, respectively. The protein is Glyoxylate/hydroxypyruvate reductase A of Escherichia coli (strain 55989 / EAEC).